The following is a 262-amino-acid chain: Phycoerythrobilin:ferredoxin oxidoreductase (262 aa).

This sequence belongs to the HY2 family.

It carries out the reaction (3Z)-phycoerythrobilin + oxidized 2[4Fe-4S]-[ferredoxin] = 15,16-dihydrobiliverdin + reduced 2[4Fe-4S]-[ferredoxin] + 2 H(+). In terms of biological role, catalyzes the two-electron reduction of the C2 and C3(1) diene system of 15,16-dihydrobiliverdin. This chain is Phycoerythrobilin:ferredoxin oxidoreductase, found in Synechococcus sp. (strain RCC307).